A 414-amino-acid polypeptide reads, in one-letter code: Putative polyketide beta-ketoacyl synthase 2 (414 aa).

The 404-residue stretch at 4 to 407 folds into the Ketosynthase family 3 (KS3) domain; the sequence is PRRAVVTGLG…GNNSALVLRR (404 aa).

Belongs to the thiolase-like superfamily. Beta-ketoacyl-ACP synthases family.

Functionally, involved in developmentally regulated synthesis of a compound biosynthetically related to polyketide antibiotics which is essential for spore color in Streptomyces halstedii. The polypeptide is Putative polyketide beta-ketoacyl synthase 2 (sch2) (Streptomyces halstedii).